Here is a 206-residue protein sequence, read N- to C-terminus: Probable chemoreceptor glutamine deamidase CheD (206 aa).

The protein belongs to the CheD family.

The enzyme catalyses L-glutaminyl-[protein] + H2O = L-glutamyl-[protein] + NH4(+). In terms of biological role, probably deamidates glutamine residues to glutamate on methyl-accepting chemotaxis receptors (MCPs), playing an important role in chemotaxis. The polypeptide is Probable chemoreceptor glutamine deamidase CheD (Laribacter hongkongensis (strain HLHK9)).